The chain runs to 158 residues: Probable transcription regulator ArfM (158 aa).

Activates, in anaerobic conditions, the transcription of the fermentative operons lctEP and alsDS, of the hmp gene encoding a flavohemoglobin-like protein, the nitrite reductase operon nasDE and the heme biosynthesis genes hemN and hemZ. The sequence is that of Probable transcription regulator ArfM (arfM) from Bacillus subtilis (strain 168).